The sequence spans 401 residues: Imidazolonepropionase (401 aa).

Residues H70 and H72 each contribute to the Fe(3+) site. Residues H70 and H72 each contribute to the Zn(2+) site. Residues R79, Y142, and H175 each coordinate 4-imidazolone-5-propanoate. N-formimidoyl-L-glutamate is bound at residue Y142. H238 is a Fe(3+) binding site. H238 contacts Zn(2+). Position 241 (Q241) interacts with 4-imidazolone-5-propanoate. Position 313 (D313) interacts with Fe(3+). D313 contacts Zn(2+). N315 and G317 together coordinate N-formimidoyl-L-glutamate. T318 contacts 4-imidazolone-5-propanoate.

This sequence belongs to the metallo-dependent hydrolases superfamily. HutI family. It depends on Zn(2+) as a cofactor. Requires Fe(3+) as cofactor.

The protein localises to the cytoplasm. The catalysed reaction is 4-imidazolone-5-propanoate + H2O = N-formimidoyl-L-glutamate. Its pathway is amino-acid degradation; L-histidine degradation into L-glutamate; N-formimidoyl-L-glutamate from L-histidine: step 3/3. In terms of biological role, catalyzes the hydrolytic cleavage of the carbon-nitrogen bond in imidazolone-5-propanoate to yield N-formimidoyl-L-glutamate. It is the third step in the universal histidine degradation pathway. This Acidiphilium cryptum (strain JF-5) protein is Imidazolonepropionase.